We begin with the raw amino-acid sequence, 318 residues long: Ribosomal RNA small subunit methyltransferase H (318 aa).

Residues 35–37 (GGH), Asp54, Phe83, Asp104, and Gln111 each bind S-adenosyl-L-methionine.

It belongs to the methyltransferase superfamily. RsmH family.

Its subcellular location is the cytoplasm. The enzyme catalyses cytidine(1402) in 16S rRNA + S-adenosyl-L-methionine = N(4)-methylcytidine(1402) in 16S rRNA + S-adenosyl-L-homocysteine + H(+). In terms of biological role, specifically methylates the N4 position of cytidine in position 1402 (C1402) of 16S rRNA. This is Ribosomal RNA small subunit methyltransferase H from Latilactobacillus sakei subsp. sakei (strain 23K) (Lactobacillus sakei subsp. sakei).